We begin with the raw amino-acid sequence, 127 residues long: Cytochrome c' (127 aa).

At Gln-1 the chain carries Pyrrolidone carboxylic acid. 6 residues coordinate heme c: Arg-12, Gln-13, Asp-67, Cys-116, Cys-119, and His-120.

As to quaternary structure, homodimer. Binds 1 heme c group covalently per subunit.

It localises to the periplasm. Its function is as follows. Cytochrome c' is the most widely occurring bacterial c-type cytochrome. Cytochromes c' are high-spin proteins and the heme has no sixth ligand. Their exact function is not known. This is Cytochrome c' from Alcaligenes xylosoxydans xylosoxydans (Achromobacter xylosoxidans).